The sequence spans 390 residues: MFELSTIYAAFERYFGKPPTRIARAPGRVNLIGEHTDYNDGFVFPMALDRATYVAARPRDDRIVRVFSVKFRDEDQFDLDHIVRDTQRQWVNYIRGVAKGLLARDLPLRGADLLIDSDVPSGSGLSSSAALEVAVGYTFQLLNQINLLGEELALLAQGAEHSFVGVKCGIMDQLIAALGEAGHALLIDCRDLSYRPIPIPTGVRVVVCDSGVRHRLAGSEYNQRRAGCEEAVRILRPALGKIQALRDVRSTDLAEYGHLLPPELLPLVRHVVSENERTLAAADALAAGDVVKMGQLMVESHQSLRDDYCVSIAELDTLVDLALAAPGCYGSRMTGGGFGGSTVSLVEAEKVDEFVAAMIAGYAIRTGRTLQPLVCTAGAGVSCVYASEEE.

34-37 contacts substrate; that stretch reads EHTD. ATP is bound by residues Ser-68 and 122–128; that span reads GSGLSSS. Mg(2+)-binding residues include Ser-128 and Glu-160. The active-site Proton acceptor is the Asp-172. Tyr-221 contacts substrate.

This sequence belongs to the GHMP kinase family. GalK subfamily.

The protein resides in the cytoplasm. The enzyme catalyses alpha-D-galactose + ATP = alpha-D-galactose 1-phosphate + ADP + H(+). It functions in the pathway carbohydrate metabolism; galactose metabolism. Its function is as follows. Catalyzes the transfer of the gamma-phosphate of ATP to D-galactose to form alpha-D-galactose-1-phosphate (Gal-1-P). This Chloroflexus aggregans (strain MD-66 / DSM 9485) protein is Galactokinase.